The chain runs to 421 residues: Gamma-glutamyl phosphate reductase (421 aa).

Belongs to the gamma-glutamyl phosphate reductase family.

It localises to the cytoplasm. The enzyme catalyses L-glutamate 5-semialdehyde + phosphate + NADP(+) = L-glutamyl 5-phosphate + NADPH + H(+). Its pathway is amino-acid biosynthesis; L-proline biosynthesis; L-glutamate 5-semialdehyde from L-glutamate: step 2/2. In terms of biological role, catalyzes the NADPH-dependent reduction of L-glutamate 5-phosphate into L-glutamate 5-semialdehyde and phosphate. The product spontaneously undergoes cyclization to form 1-pyrroline-5-carboxylate. This chain is Gamma-glutamyl phosphate reductase, found in Pseudomonas aeruginosa (strain UCBPP-PA14).